We begin with the raw amino-acid sequence, 790 residues long: PAN2-PAN3 deadenylation complex subunit PAN3 (790 aa).

Disordered regions lie at residues 166 to 191 (IAQQQPQHPQKQQQHPPSVGGGAVSA) and 235 to 259 (AMISGAGPGEKSPPHGMTPHGASPI). Residues 168–191 (QQQPQHPQKQQQHPPSVGGGAVSA) show a composition bias toward low complexity. The interval 369–655 (DAAEAAQHAL…SVTDLMPMIG (287 aa)) is pseudokinase domain. ATP contacts are provided by residues arginine 423, 472 to 479 (DYHPGSQT), and 552 to 553 (TK). The stretch at 656 to 694 (ARFYTQLDALQSKIDMQEDELAKEMENGRLYRILVKLNS) forms a coiled coil. A knob domain region spans residues 695 to 790 (INERPDFNLD…FSELMSSAAN (96 aa)).

The protein belongs to the protein kinase superfamily. PAN3 family. In terms of assembly, homodimer. Forms a heterotrimer with a catalytic subunit PAN2 to form the poly(A)-nuclease (PAN) deadenylation complex. Interacts (via PAM-2 motif) with poly(A)-binding protein (via PABC domain), conferring substrate specificity of the enzyme complex. Interacts with the GW182 family protein gw. Interacts with Gyf.

The protein localises to the cytoplasm. It is found in the P-body. Its function is as follows. Regulatory subunit of the poly(A)-nuclease (PAN) deadenylation complex, one of two cytoplasmic mRNA deadenylases involved in general and miRNA-mediated mRNA turnover. PAN specifically shortens poly(A) tails of RNA and the activity is stimulated by poly(A)-binding protein (PABP). PAN deadenylation is followed by rapid degradation of the shortened mRNA tails by the CCR4-NOT complex. Deadenylated mRNAs are then degraded by two alternative mechanisms, namely exosome-mediated 3'-5' exonucleolytic degradation, or deadenylation-dependent mRNA decaping and subsequent 5'-3' exonucleolytic degradation by XRN1. PAN3 acts as a positive regulator for PAN activity, recruiting the catalytic subunit PAN2 to mRNA via its interaction with RNA and PABP, and to miRNA targets via its interaction with GW182 family proteins. This Drosophila melanogaster (Fruit fly) protein is PAN2-PAN3 deadenylation complex subunit PAN3.